A 200-amino-acid chain; its full sequence is Protein Syd (200 aa).

Belongs to the Syd family.

The protein localises to the cell inner membrane. Functionally, interacts with the SecY protein in vivo. May bind preferentially to an uncomplexed state of SecY, thus functioning either as a chelating agent for excess SecY in the cell or as a regulatory factor that negatively controls the translocase function. This Colwellia psychrerythraea (strain 34H / ATCC BAA-681) (Vibrio psychroerythus) protein is Protein Syd.